Reading from the N-terminus, the 221-residue chain is Small histidine-alanine-rich protein (221 aa).

Positions 1-21 (MVSFSKNKILSAAVFASVLLL) are cleaved as a signal peptide. The segment covering 52–67 (AHAGDAHHAHHVADAH) has biased composition (basic and acidic residues). Disordered regions lie at residues 52-141 (AHAG…AANA) and 180-221 (AHHD…HLHH). 2 tandem repeats follow at residues 57–59 (AHH) and 60–62 (AHH). A 4 X 3 AA approximate tandem repeats of A-H-H region spans residues 57-68 (AHHAHHVADAHH). The stretch at 63–65 (VAD) is one 1-3; approximate repeat. Repeat copies occupy residues 66–68 (AHH), 69–74 (AHHAAN), 75–80 (AHHAAN), 81–86 (AHHAAN), 87–92 (AHHAAN), 93–98 (AHHAAN), 99–104 (AHHAAN), 105–110 (AHHAAN), 111–116 (AHHAAN), 117–122 (AHHAAN), 123–128 (AHHAAN), 129–134 (AHHAAN), and 135–140 (AHHAAN). The 13 X 6 AA approximate tandem repeats of A-H-H-A-A-N stretch occupies residues 69 to 146 (AHHAANAHHA…HAANAHHAAD (78 aa)). Over residues 75–141 (AHHAANAHHA…AANAHHAANA (67 aa)) the composition is skewed to low complexity. A 2-13; approximate repeat occupies 141-146 (AHHAAD). 7 repeat units span residues 176 to 180 (HHDDA), 181 to 185 (HHDGA), 186 to 190 (HHDDA), 191 to 195 (HHDGA), 196 to 200 (HHDGA), 201 to 205 (HHDGA), and 206 to 210 (HHDGA). Residues 176 to 210 (HHDDAHHDGAHHDDAHHDGAHHDGAHHDGAHHDGA) are 7 X 5 AA tandem repeats of H-H-D-[DG]-A. Basic and acidic residues predominate over residues 180 to 211 (AHHDGAHHDDAHHDGAHHDGAHHDGAHHDGAH).

This Plasmodium falciparum (isolate FC27 / Papua New Guinea) protein is Small histidine-alanine-rich protein.